We begin with the raw amino-acid sequence, 520 residues long: Cytochrome P450 6d3 (520 aa).

Cysteine 461 contacts heme.

This sequence belongs to the cytochrome P450 family. The cofactor is heme.

It localises to the endoplasmic reticulum membrane. Its subcellular location is the microsome membrane. Its function is as follows. Metabolizes pyrethroid insecticides and other xenobiotics. This chain is Cytochrome P450 6d3 (CYP6D3), found in Musca domestica (House fly).